Consider the following 614-residue polypeptide: BPI fold-containing family B member 4 (614 aa).

The N-terminal stretch at 1–18 (MWMAWCVAALSVVAVCGT) is a signal peptide. The N-linked (GlcNAc...) asparagine glycan is linked to asparagine 273. Cysteine 295 and cysteine 332 form a disulfide bridge.

This sequence belongs to the BPI/LBP/Plunc superfamily. BPI/LBP family. As to expression, expressed in nasal tissue.

The protein resides in the secreted. It is found in the cytoplasm. Functionally, may have the capacity to recognize and bind specific classes of odorants. May act as a carrier molecule, transporting odorants across the mucus layer to access receptor sites. May serve as a primary defense mechanism by recognizing and removing potentially harmful odorants or pathogenic microorganisms from the mucosa or clearing excess odorant from mucus to enable new odorant stimuli to be received. The polypeptide is BPI fold-containing family B member 4 (BPIFB4) (Homo sapiens (Human)).